Reading from the N-terminus, the 319-residue chain is Pantothenate kinase (319 aa).

96–103 (GSVAVGKS) lines the ATP pocket.

Belongs to the prokaryotic pantothenate kinase family.

It is found in the cytoplasm. It carries out the reaction (R)-pantothenate + ATP = (R)-4'-phosphopantothenate + ADP + H(+). The protein operates within cofactor biosynthesis; coenzyme A biosynthesis; CoA from (R)-pantothenate: step 1/5. The polypeptide is Pantothenate kinase (coaA) (Bacillus subtilis (strain 168)).